The chain runs to 267 residues: Imidazole glycerol phosphate synthase subunit HisF (267 aa).

Residues aspartate 22 and aspartate 141 contribute to the active site.

It belongs to the HisA/HisF family. In terms of assembly, heterodimer of HisH and HisF.

The protein localises to the cytoplasm. The catalysed reaction is 5-[(5-phospho-1-deoxy-D-ribulos-1-ylimino)methylamino]-1-(5-phospho-beta-D-ribosyl)imidazole-4-carboxamide + L-glutamine = D-erythro-1-(imidazol-4-yl)glycerol 3-phosphate + 5-amino-1-(5-phospho-beta-D-ribosyl)imidazole-4-carboxamide + L-glutamate + H(+). It participates in amino-acid biosynthesis; L-histidine biosynthesis; L-histidine from 5-phospho-alpha-D-ribose 1-diphosphate: step 5/9. Its function is as follows. IGPS catalyzes the conversion of PRFAR and glutamine to IGP, AICAR and glutamate. The HisF subunit catalyzes the cyclization activity that produces IGP and AICAR from PRFAR using the ammonia provided by the HisH subunit. The sequence is that of Imidazole glycerol phosphate synthase subunit HisF from Mycobacterium bovis (strain ATCC BAA-935 / AF2122/97).